We begin with the raw amino-acid sequence, 126 residues long: Large ribosomal subunit protein bL12 (126 aa).

The protein belongs to the bacterial ribosomal protein bL12 family. In terms of assembly, homodimer. Part of the ribosomal stalk of the 50S ribosomal subunit. Forms a multimeric L10(L12)X complex, where L10 forms an elongated spine to which 2 to 4 L12 dimers bind in a sequential fashion. Binds GTP-bound translation factors.

Forms part of the ribosomal stalk which helps the ribosome interact with GTP-bound translation factors. Is thus essential for accurate translation. The sequence is that of Large ribosomal subunit protein bL12 from Elusimicrobium minutum (strain Pei191).